The chain runs to 545 residues: Threonine--tRNA ligase catalytic subunit (545 aa).

Positions 139-433 (DHRLIGEKLD…LLEHFKGKLP (295 aa)) are catalytic. Residues Cys231, His282, and His410 each coordinate Zn(2+).

The protein belongs to the class-II aminoacyl-tRNA synthetase family. In terms of assembly, homodimer. Probably interacts with its editing subunit. The cofactor is Zn(2+).

It localises to the cytoplasm. The catalysed reaction is tRNA(Thr) + L-threonine + ATP = L-threonyl-tRNA(Thr) + AMP + diphosphate + H(+). Its function is as follows. Catalyzes the attachment of threonine to tRNA(Thr) in a two-step reaction: L-threonine is first activated by ATP to form Thr-AMP and then transferred to the acceptor end of tRNA(Thr). Also activates L-serine and transfers it to tRNA(Thr) but cannot deacylate incorrectly charged amino acid; unlike most archaea the editing function is found in a freestanding protein. The polypeptide is Threonine--tRNA ligase catalytic subunit (Saccharolobus islandicus (strain M.16.27) (Sulfolobus islandicus)).